Here is a 354-residue protein sequence, read N- to C-terminus: Magnesium-protoporphyrin IX monomethyl ester [oxidative] cyclase 2 (354 aa).

Belongs to the AcsF family. It depends on Fe cation as a cofactor.

It carries out the reaction Mg-protoporphyrin IX 13-monomethyl ester + 3 NADPH + 3 O2 + 2 H(+) = 3,8-divinyl protochlorophyllide a + 3 NADP(+) + 5 H2O. The protein operates within porphyrin-containing compound metabolism; chlorophyll biosynthesis (light-independent). Its function is as follows. Catalyzes the formation of the isocyclic ring in chlorophyll biosynthesis. Mediates the cyclase reaction, which results in the formation of divinylprotochlorophyllide (Pchlide) characteristic of all chlorophylls from magnesium-protoporphyrin IX 13-monomethyl ester (MgPMME). In Thermosynechococcus vestitus (strain NIES-2133 / IAM M-273 / BP-1), this protein is Magnesium-protoporphyrin IX monomethyl ester [oxidative] cyclase 2.